The sequence spans 333 residues: Sphingomyelinase C (333 aa).

The N-terminal stretch at M1–A27 is a signal peptide. A disulfide bridge links C150 with C186.

It belongs to the neutral sphingomyelinase family. Mg(2+) is required as a cofactor.

The protein localises to the secreted. It carries out the reaction a sphingomyelin + H2O = phosphocholine + an N-acylsphing-4-enine + H(+). With respect to regulation, activated by cobalt and manganese ions. Functionally, required, with sphingomyelinase, to effect target cell lysis (hemolysis). This is Sphingomyelinase C (sph) from Bacillus cereus.